The primary structure comprises 435 residues: Enolase (435 aa).

Q163 lines the (2R)-2-phosphoglycerate pocket. The active-site Proton donor is the E205. Positions 243, 292, and 319 each coordinate Mg(2+). Positions 344, 373, 374, and 395 each coordinate (2R)-2-phosphoglycerate. The active-site Proton acceptor is K344.

It belongs to the enolase family. In terms of assembly, homooctamer, a tetramer of homodimers. Mg(2+) serves as cofactor.

Its subcellular location is the cytoplasm. It is found in the secreted. The protein resides in the cell surface. The protein localises to the cell wall. It carries out the reaction (2R)-2-phosphoglycerate = phosphoenolpyruvate + H2O. The protein operates within carbohydrate degradation; glycolysis; pyruvate from D-glyceraldehyde 3-phosphate: step 4/5. Functionally, catalyzes the reversible conversion of 2-phosphoglycerate (2-PG) into phosphoenolpyruvate (PEP). It is essential for the degradation of carbohydrates via glycolysis. 'Moonlights' as a plasminogen receptor. Binds plasminogen and more weakly plasmin when expressed on the bacterial cell surface; probably has more than one plasmin(ogen) binding site, may bind via Lys residues. Plasminogen binding potentially allows the bacterium to acquire surface-associated proteolytic activity, which in turn contributes to tissue invasion and virulence. This Streptococcus pyogenes serotype M6 (strain ATCC BAA-946 / MGAS10394) protein is Enolase.